Reading from the N-terminus, the 152-residue chain is Transcriptional regulator MraZ (152 aa).

SpoVT-AbrB domains are found at residues 5-52 (ASAI…PIHE) and 81-124 (AHEV…DEQA).

This sequence belongs to the MraZ family. Forms oligomers.

The protein localises to the cytoplasm. It localises to the nucleoid. This Shewanella putrefaciens (strain CN-32 / ATCC BAA-453) protein is Transcriptional regulator MraZ.